The following is a 430-amino-acid chain: Serine--tRNA ligase (430 aa).

Residue 237–239 (TAE) participates in L-serine binding. Residue 268–270 (RAE) coordinates ATP. L-serine is bound at residue Glu291. 355–358 (EISS) is an ATP binding site. Ser391 is an L-serine binding site.

This sequence belongs to the class-II aminoacyl-tRNA synthetase family. Type-1 seryl-tRNA synthetase subfamily. In terms of assembly, homodimer. The tRNA molecule binds across the dimer.

The protein localises to the cytoplasm. The enzyme catalyses tRNA(Ser) + L-serine + ATP = L-seryl-tRNA(Ser) + AMP + diphosphate + H(+). It catalyses the reaction tRNA(Sec) + L-serine + ATP = L-seryl-tRNA(Sec) + AMP + diphosphate + H(+). It functions in the pathway aminoacyl-tRNA biosynthesis; selenocysteinyl-tRNA(Sec) biosynthesis; L-seryl-tRNA(Sec) from L-serine and tRNA(Sec): step 1/1. In terms of biological role, catalyzes the attachment of serine to tRNA(Ser). Is also able to aminoacylate tRNA(Sec) with serine, to form the misacylated tRNA L-seryl-tRNA(Sec), which will be further converted into selenocysteinyl-tRNA(Sec). In Serratia proteamaculans (strain 568), this protein is Serine--tRNA ligase.